A 270-amino-acid chain; its full sequence is Endonuclease 4 (270 aa).

Residues His-69, His-108, Glu-139, Asp-169, His-172, His-204, Asp-217, His-219, and Glu-248 each coordinate Zn(2+).

This sequence belongs to the AP endonuclease 2 family. Requires Zn(2+) as cofactor.

The enzyme catalyses Endonucleolytic cleavage to 5'-phosphooligonucleotide end-products.. Functionally, endonuclease IV plays a role in DNA repair. It cleaves phosphodiester bonds at apurinic or apyrimidinic (AP) sites, generating a 3'-hydroxyl group and a 5'-terminal sugar phosphate. In addition, possesses a 3'-5' exonuclease activity. This is Endonuclease 4 from Thermus thermophilus (strain ATCC BAA-163 / DSM 7039 / HB27).